A 336-amino-acid chain; its full sequence is Tryptophan--tRNA ligase (336 aa).

ATP is bound by residues 11–13 and 19–20; these read TTT and GN. The short motif at 12–20 is the 'HIGH' region element; that stretch reads TTGIPHLGN. L-tryptophan is bound at residue Asp145. ATP is bound by residues 157–159, Leu196, and 203–207; these read GRD and KMSKS. A 'KMSKS' region motif is present at residues 203–207; sequence KMSKS.

This sequence belongs to the class-I aminoacyl-tRNA synthetase family. In terms of assembly, homodimer.

It localises to the cytoplasm. It catalyses the reaction tRNA(Trp) + L-tryptophan + ATP = L-tryptophyl-tRNA(Trp) + AMP + diphosphate + H(+). Catalyzes the attachment of tryptophan to tRNA(Trp). This is Tryptophan--tRNA ligase from Neisseria meningitidis serogroup A / serotype 4A (strain DSM 15465 / Z2491).